The chain runs to 418 residues: Histidinol dehydrogenase (418 aa).

NAD(+) is bound by residues Tyr119, Gln180, and Asn203. Substrate is bound by residues Thr226, Gln248, and His251. Zn(2+)-binding residues include Gln248 and His251. Catalysis depends on proton acceptor residues Glu316 and His317. Residues His317, Asp350, Glu404, and His409 each coordinate substrate. Asp350 is a Zn(2+) binding site. His409 contacts Zn(2+).

Belongs to the histidinol dehydrogenase family. Zn(2+) is required as a cofactor.

It carries out the reaction L-histidinol + 2 NAD(+) + H2O = L-histidine + 2 NADH + 3 H(+). The protein operates within amino-acid biosynthesis; L-histidine biosynthesis; L-histidine from 5-phospho-alpha-D-ribose 1-diphosphate: step 9/9. Catalyzes the sequential NAD-dependent oxidations of L-histidinol to L-histidinaldehyde and then to L-histidine. The polypeptide is Histidinol dehydrogenase (Staphylococcus aureus (strain MRSA252)).